We begin with the raw amino-acid sequence, 165 residues long: Large ribosomal subunit protein bL17 (165 aa).

Positions 138 to 158 (QEKREAQEKAREEKRTARKSD) are enriched in basic and acidic residues. Residues 138–165 (QEKREAQEKAREEKRTARKSDSVPARKK) form a disordered region.

Belongs to the bacterial ribosomal protein bL17 family. As to quaternary structure, part of the 50S ribosomal subunit. Contacts protein L32.

The polypeptide is Large ribosomal subunit protein bL17 (Leptospira borgpetersenii serovar Hardjo-bovis (strain JB197)).